Reading from the N-terminus, the 441-residue chain is MFQRRSLLSVRSSGSQIAFRRFVSLTHKDPTPDTTSCNIIKKEGANIISVYARYPVVAAKGEGSYLFDKEGRKYIDFTSGVAVTSLGHAHPEVARLAADQCSKLVHSSNLFYNEPAIELSNVINNSLAKNSGIAGPTKIFFANCGTEANETALKFARKAAFEKYGEGKSQIVYFNNSFHGRSLGSLSITANPKYKRGFQPLLPDVVQAVYNDPASIEQFVNDKTAAVIVEPVQGEGGICPAKPEFLIALRKACDKVGASLIYDEIQCGLGRSGDLWAHSIVKDVASPDIITVAKPLANGLPIGATIVSSKIAAEIHPGEHGSTFGGNPVACRVGTFCVNELGSSKILQNVRKQHKALTSRFDDFVAKYPNLIRGYAGRGLLLGLQFTEPPAKFIELARQQGLLLLPGGNNNTRVLPSLNVKDEVIAKGLDIMESTLKALSK.

Lysine 294 is subject to N6-(pyridoxal phosphate)lysine.

Belongs to the class-III pyridoxal-phosphate-dependent aminotransferase family. Pyridoxal 5'-phosphate is required as a cofactor.

It is found in the mitochondrion matrix. It carries out the reaction N(2)-acetyl-L-ornithine + 2-oxoglutarate = N-acetyl-L-glutamate 5-semialdehyde + L-glutamate. It functions in the pathway amino-acid biosynthesis; L-arginine biosynthesis; N(2)-acetyl-L-ornithine from L-glutamate: step 4/4. The polypeptide is Probable acetylornithine aminotransferase, mitochondrial (arg1) (Schizosaccharomyces pombe (strain 972 / ATCC 24843) (Fission yeast)).